Here is a 142-residue protein sequence, read N- to C-terminus: Hemoglobin subunit alpha-1/2 (142 aa).

A Globin domain is found at 2–142 (VLSPADKTNI…VSTVLTSKYR (141 aa)). S4 carries the phosphoserine modification. Position 8 is an N6-succinyllysine (K8). Residue T9 is modified to Phosphothreonine. K12 bears the N6-succinyllysine mark. K17 bears the N6-acetyllysine; alternate mark. An N6-succinyllysine; alternate modification is found at K17. Y25 is subject to Phosphotyrosine. The residue at position 41 (K41) is an N6-succinyllysine. H59 is a binding site for O2. Residue H88 participates in heme b binding. At S103 the chain carries Phosphoserine. T109 carries the phosphothreonine modification. Position 125 is a phosphoserine (S125). A phosphothreonine mark is found at T135 and T138. A Phosphoserine modification is found at S139.

This sequence belongs to the globin family. As to quaternary structure, heterotetramer of two alpha chains and two beta chains. Red blood cells.

In terms of biological role, involved in oxygen transport from the lung to the various peripheral tissues. The sequence is that of Hemoglobin subunit alpha-1/2 from Oryctolagus cuniculus (Rabbit).